The following is a 106-amino-acid chain: UPF0091 protein RP266 (106 aa).

This sequence belongs to the UPF0091 family.

The chain is UPF0091 protein RP266 from Rickettsia prowazekii (strain Madrid E).